A 228-amino-acid chain; its full sequence is Sec-independent protein translocase protein TatB (228 aa).

Residues 1–21 (MFDFGLGELVFVGIIALIVLG) traverse the membrane as a helical segment. 2 disordered regions span residues 138 to 162 (RSYA…AETD) and 195 to 228 (PVPH…VRKS). Residues 206–228 (AISRKRDLRPKSRAKPKLRVRKS) are compositionally biased toward basic residues.

Belongs to the TatB family. In terms of assembly, the Tat system comprises two distinct complexes: a TatABC complex, containing multiple copies of TatA, TatB and TatC subunits, and a separate TatA complex, containing only TatA subunits. Substrates initially bind to the TatABC complex, which probably triggers association of the separate TatA complex to form the active translocon.

It localises to the cell inner membrane. Functionally, part of the twin-arginine translocation (Tat) system that transports large folded proteins containing a characteristic twin-arginine motif in their signal peptide across membranes. Together with TatC, TatB is part of a receptor directly interacting with Tat signal peptides. TatB may form an oligomeric binding site that transiently accommodates folded Tat precursor proteins before their translocation. This is Sec-independent protein translocase protein TatB from Neisseria meningitidis serogroup A / serotype 4A (strain DSM 15465 / Z2491).